An 86-amino-acid chain; its full sequence is Large ribosomal subunit protein bL27 (86 aa).

A disordered region spans residues Met-1 to Phe-26.

This sequence belongs to the bacterial ribosomal protein bL27 family.

This Bdellovibrio bacteriovorus (strain ATCC 15356 / DSM 50701 / NCIMB 9529 / HD100) protein is Large ribosomal subunit protein bL27.